A 426-amino-acid polypeptide reads, in one-letter code: Gamma-glutamyl phosphate reductase (426 aa).

It belongs to the gamma-glutamyl phosphate reductase family.

It is found in the cytoplasm. The catalysed reaction is L-glutamate 5-semialdehyde + phosphate + NADP(+) = L-glutamyl 5-phosphate + NADPH + H(+). The protein operates within amino-acid biosynthesis; L-proline biosynthesis; L-glutamate 5-semialdehyde from L-glutamate: step 2/2. Functionally, catalyzes the NADPH-dependent reduction of L-glutamate 5-phosphate into L-glutamate 5-semialdehyde and phosphate. The product spontaneously undergoes cyclization to form 1-pyrroline-5-carboxylate. The protein is Gamma-glutamyl phosphate reductase of Cupriavidus taiwanensis (strain DSM 17343 / BCRC 17206 / CCUG 44338 / CIP 107171 / LMG 19424 / R1) (Ralstonia taiwanensis (strain LMG 19424)).